The sequence spans 119 residues: Large ribosomal subunit protein uL18 (119 aa).

The protein belongs to the universal ribosomal protein uL18 family. In terms of assembly, part of the 50S ribosomal subunit; part of the 5S rRNA/L5/L18/L25 subcomplex. Contacts the 5S and 23S rRNAs.

In terms of biological role, this is one of the proteins that bind and probably mediate the attachment of the 5S RNA into the large ribosomal subunit, where it forms part of the central protuberance. The polypeptide is Large ribosomal subunit protein uL18 (Mesorhizobium japonicum (strain LMG 29417 / CECT 9101 / MAFF 303099) (Mesorhizobium loti (strain MAFF 303099))).